The sequence spans 113 residues: Large ribosomal subunit protein bL19 (113 aa).

The protein belongs to the bacterial ribosomal protein bL19 family.

This protein is located at the 30S-50S ribosomal subunit interface and may play a role in the structure and function of the aminoacyl-tRNA binding site. In Corynebacterium glutamicum (strain R), this protein is Large ribosomal subunit protein bL19.